The chain runs to 520 residues: Phosphoenolpyruvate carboxykinase (ATP) (520 aa).

Positions 61, 196, and 202 each coordinate substrate. ATP-binding positions include K202, H222, and 238 to 246 (GLSGTGKTT). Residues K202 and H222 each contribute to the Mn(2+) site. Mn(2+) is bound at residue D259. Residues E287, R324, 443–444 (RI), and T449 contribute to the ATP site. R324 is a binding site for substrate.

The protein belongs to the phosphoenolpyruvate carboxykinase (ATP) family. Requires Mn(2+) as cofactor.

It localises to the cytoplasm. It carries out the reaction oxaloacetate + ATP = phosphoenolpyruvate + ADP + CO2. Its pathway is carbohydrate biosynthesis; gluconeogenesis. Involved in the gluconeogenesis. Catalyzes the conversion of oxaloacetate (OAA) to phosphoenolpyruvate (PEP) through direct phosphoryl transfer between the nucleoside triphosphate and OAA. The protein is Phosphoenolpyruvate carboxykinase (ATP) of Amoebophilus asiaticus (strain 5a2).